The sequence spans 1182 residues: Intraflagellar transport protein 122 homolog (1182 aa).

WD repeat units lie at residues 10-50, 51-91, 93-129, 131-169, 174-217, 219-258, 260-300, and 453-492; these read KAEQ…QPLK, GHKD…LKYT, NDSI…VSKH, SSSK…KVKI, GSLS…IGKD, PLNF…LGTV, EQNS…HGLY, and KQAT…LLFQ.

As to quaternary structure, component of the IFT complex A (IFT-A) complex. IFT-A complex is divided into a core subcomplex composed of IFT122:IFT140:WDR19 which is associated with TULP3 and a peripheral subcomplex composed of IFT43:WDR35:TTC21B. Interacts with IFT43:WDR35; the interaction connects the 2 IFT-A subcomplexes. Interacts with IFTAP; the interaction associates IFTAP with IFT-A complex.

It localises to the cell projection. It is found in the cilium. The protein resides in the cytoplasm. Its subcellular location is the cytoskeleton. The protein localises to the cilium basal body. In terms of biological role, as a component of the IFT complex A (IFT-A), a complex required for retrograde ciliary transport and entry into cilia of G protein-coupled receptors (GPCRs), it is required in ciliogenesis and ciliary protein trafficking. Involved in cilia formation during neuronal patterning. Acts as a negative regulator of Shh signaling. Required to recruit TULP3 to primary cilia. The chain is Intraflagellar transport protein 122 homolog from Mus musculus (Mouse).